The following is a 770-amino-acid chain: DNA topoisomerase 1 (770 aa).

In terms of domain architecture, Toprim spans 4-140; the sequence is FRIIIAEKAD…EIRRAKFSAL (137 aa). Mg(2+) is bound by residues E10 and D109. A Topo IA-type catalytic domain is found at 156-563; that stretch reads NYSLADAADA…ESKKMLHEVL (408 aa). The tract at residues 194–199 is interaction with DNA; the sequence is SAGRVQ. The active-site O-(5'-phospho-DNA)-tyrosine intermediate is Y312. 3 consecutive C4-type zinc fingers follow at residues 611–638, 673–700, and 719–744; these read CEDP…CPVC, CPAD…YPKC, and CPYC…NMQC.

Belongs to the type IA topoisomerase family. In terms of assembly, monomer. Mg(2+) is required as a cofactor.

It catalyses the reaction ATP-independent breakage of single-stranded DNA, followed by passage and rejoining.. In terms of biological role, releases the supercoiling and torsional tension of DNA, which is introduced during the DNA replication and transcription, by transiently cleaving and rejoining one strand of the DNA duplex. Introduces a single-strand break via transesterification at a target site in duplex DNA. The scissile phosphodiester is attacked by the catalytic tyrosine of the enzyme, resulting in the formation of a DNA-(5'-phosphotyrosyl)-enzyme intermediate and the expulsion of a 3'-OH DNA strand. The free DNA strand then undergoes passage around the unbroken strand, thus removing DNA supercoils. Finally, in the religation step, the DNA 3'-OH attacks the covalent intermediate to expel the active-site tyrosine and restore the DNA phosphodiester backbone. This is DNA topoisomerase 1 from Thermoplasma acidophilum (strain ATCC 25905 / DSM 1728 / JCM 9062 / NBRC 15155 / AMRC-C165).